The sequence spans 328 residues: Phosphatidylglycerol--prolipoprotein diacylglyceryl transferase (328 aa).

The next 3 membrane-spanning stretches (helical) occupy residues 15–35 (VIQG…ILIS), 57–77 (IFMF…STLV), and 106–126 (GMAI…TINT). Arginine 156 is a binding site for a 1,2-diacyl-sn-glycero-3-phospho-(1'-sn-glycerol). 2 consecutive transmembrane segments (helical) span residues 242–262 (GFIF…IEYL) and 289–309 (ISMG…WIIV).

The protein belongs to the Lgt family.

The protein localises to the cell inner membrane. It carries out the reaction L-cysteinyl-[prolipoprotein] + a 1,2-diacyl-sn-glycero-3-phospho-(1'-sn-glycerol) = an S-1,2-diacyl-sn-glyceryl-L-cysteinyl-[prolipoprotein] + sn-glycerol 1-phosphate + H(+). The protein operates within protein modification; lipoprotein biosynthesis (diacylglyceryl transfer). Catalyzes the transfer of the diacylglyceryl group from phosphatidylglycerol to the sulfhydryl group of the N-terminal cysteine of a prolipoprotein, the first step in the formation of mature lipoproteins. This chain is Phosphatidylglycerol--prolipoprotein diacylglyceryl transferase, found in Borreliella burgdorferi (strain ZS7) (Borrelia burgdorferi).